Consider the following 330-residue polypeptide: MKMYYESDVNTDALEGKTVAVMGYGSQGRAQSRNMADSGVNVIVGLRENGNSWNLAKEDGMTVKTFSDAAKEADIIHILLPDEIQEKVYNEQIAPYVEAGNTISFSHGYNIHFGLIKPDEDVNIVMFAPKGPGSRVRTTYLDGFGIPGLVAIEQDATGDALQLALGMAKACGFTKAGVIETTFKEETETDLFGEQAVLCGGLTALINAGFQTLVEAGYQPEIAYFETCHEVKLIVDDIYEHGFGGMWKDVSNTAEYGGLTRRDYVITEETKKGMKKVLSEIQDGTFKKQFADENATDAANLKEMRAAEDQETIEVVGERLRKACGLQKDD.

The 181-residue stretch at 1–181 (MKMYYESDVN…GFTKAGVIET (181 aa)) folds into the KARI N-terminal Rossmann domain. Residues 24 to 27 (YGSQ), arginine 47, serine 52, and 82 to 85 (DEIQ) each bind NADP(+). The active site involves histidine 107. Residue glycine 133 coordinates NADP(+). In terms of domain architecture, KARI C-terminal knotted spans 182-327 (TFKEETETDL…ERLRKACGLQ (146 aa)). Residues aspartate 190, glutamate 194, glutamate 226, and glutamate 230 each coordinate Mg(2+). Residue serine 251 participates in substrate binding.

Belongs to the ketol-acid reductoisomerase family. It depends on Mg(2+) as a cofactor.

It carries out the reaction (2R)-2,3-dihydroxy-3-methylbutanoate + NADP(+) = (2S)-2-acetolactate + NADPH + H(+). It catalyses the reaction (2R,3R)-2,3-dihydroxy-3-methylpentanoate + NADP(+) = (S)-2-ethyl-2-hydroxy-3-oxobutanoate + NADPH + H(+). It participates in amino-acid biosynthesis; L-isoleucine biosynthesis; L-isoleucine from 2-oxobutanoate: step 2/4. It functions in the pathway amino-acid biosynthesis; L-valine biosynthesis; L-valine from pyruvate: step 2/4. Involved in the biosynthesis of branched-chain amino acids (BCAA). Catalyzes an alkyl-migration followed by a ketol-acid reduction of (S)-2-acetolactate (S2AL) to yield (R)-2,3-dihydroxy-isovalerate. In the isomerase reaction, S2AL is rearranged via a Mg-dependent methyl migration to produce 3-hydroxy-3-methyl-2-ketobutyrate (HMKB). In the reductase reaction, this 2-ketoacid undergoes a metal-dependent reduction by NADPH to yield (R)-2,3-dihydroxy-isovalerate. This is Ketol-acid reductoisomerase (NADP(+)) from Methanobrevibacter smithii (strain ATCC 35061 / DSM 861 / OCM 144 / PS).